The chain runs to 120 residues: Large ribosomal subunit protein uL18 (120 aa).

Basic and acidic residues predominate over residues 1–10 (MKLTRRESKE). The disordered stretch occupies residues 1–26 (MKLTRRESKERRHRRVRGKVQGSPER).

This sequence belongs to the universal ribosomal protein uL18 family. Part of the 50S ribosomal subunit; part of the 5S rRNA/L5/L18/L25 subcomplex. Contacts the 5S and 23S rRNAs.

In terms of biological role, this is one of the proteins that bind and probably mediate the attachment of the 5S RNA into the large ribosomal subunit, where it forms part of the central protuberance. The sequence is that of Large ribosomal subunit protein uL18 from Nostoc sp. (strain PCC 7120 / SAG 25.82 / UTEX 2576).